The sequence spans 108 residues: MKVTEVKVFPVNEDRLKAYVSITLDNCFVVRDLKVIQGTSGLFVAMPSKKRKDGQFRDIAHPLNQETRAMIEDLIFEAYEKELKSMGETLVSLKRQKAPGSDYGNDDY.

The protein belongs to the SpoVG family.

Functionally, could be involved in septation. This chain is Putative septation protein SpoVG, found in Bdellovibrio bacteriovorus (strain ATCC 15356 / DSM 50701 / NCIMB 9529 / HD100).